Here is a 107-residue protein sequence, read N- to C-terminus: UPF0145 protein Sfri_2095 (107 aa).

This sequence belongs to the UPF0145 family.

This Shewanella frigidimarina (strain NCIMB 400) protein is UPF0145 protein Sfri_2095.